Here is a 476-residue protein sequence, read N- to C-terminus: NADH-quinone oxidoreductase subunit N (476 aa).

Helical transmembrane passes span 5–25 (LALIWPELILTIGGLITLMLG), 38–58 (LSALLTLAAAAAAAIALFGVE), 70–90 (AFGGFAKLLIYAASFICILVA), 97–117 (GMRAEYPTLILFAALGMGIMA), 122–142 (LMTLYVGLELNSLAAYVLASF), 157–177 (FVLGALASGMLLYGISLLYGF), 196–218 (IGLIFGIVFVLSGLGFKISAVPF), 231–253 (TPVTTFFASAPKVAAMALMARIV), 264–284 (WQQIVIFLALASIILGAVGAI), 292–312 (LLAYSSINNVGFMLIGLAAGT), 318–338 (GVLTYLLVYLVTTLGAFLVVL), 364–384 (LAAAMSVFLFSLAGIPPLFGF), 401–421 (PLAVAGIVASVIGAFYYIAII), and 445–465 (IVAASALWLLAVGYLFIPALA).

This sequence belongs to the complex I subunit 2 family. In terms of assembly, NDH-1 is composed of 14 different subunits. Subunits NuoA, H, J, K, L, M, N constitute the membrane sector of the complex.

The protein localises to the cell inner membrane. The catalysed reaction is a quinone + NADH + 5 H(+)(in) = a quinol + NAD(+) + 4 H(+)(out). Its function is as follows. NDH-1 shuttles electrons from NADH, via FMN and iron-sulfur (Fe-S) centers, to quinones in the respiratory chain. The immediate electron acceptor for the enzyme in this species is believed to be ubiquinone. Couples the redox reaction to proton translocation (for every two electrons transferred, four hydrogen ions are translocated across the cytoplasmic membrane), and thus conserves the redox energy in a proton gradient. The polypeptide is NADH-quinone oxidoreductase subunit N (Sphingopyxis alaskensis (strain DSM 13593 / LMG 18877 / RB2256) (Sphingomonas alaskensis)).